A 93-amino-acid chain; its full sequence is Phosphoribosyl-ATP pyrophosphatase (93 aa).

The protein belongs to the PRA-PH family.

Its subcellular location is the cytoplasm. The enzyme catalyses 1-(5-phospho-beta-D-ribosyl)-ATP + H2O = 1-(5-phospho-beta-D-ribosyl)-5'-AMP + diphosphate + H(+). It functions in the pathway amino-acid biosynthesis; L-histidine biosynthesis; L-histidine from 5-phospho-alpha-D-ribose 1-diphosphate: step 2/9. The protein is Phosphoribosyl-ATP pyrophosphatase of Mycolicibacterium paratuberculosis (strain ATCC BAA-968 / K-10) (Mycobacterium paratuberculosis).